The sequence spans 315 residues: Ribosomal protein L11 methyltransferase (315 aa).

S-adenosyl-L-methionine-binding residues include threonine 152, glycine 185, aspartate 207, and asparagine 249.

It belongs to the methyltransferase superfamily. PrmA family.

It is found in the cytoplasm. It carries out the reaction L-lysyl-[protein] + 3 S-adenosyl-L-methionine = N(6),N(6),N(6)-trimethyl-L-lysyl-[protein] + 3 S-adenosyl-L-homocysteine + 3 H(+). Functionally, methylates ribosomal protein L11. The polypeptide is Ribosomal protein L11 methyltransferase (Geotalea uraniireducens (strain Rf4) (Geobacter uraniireducens)).